The primary structure comprises 469 residues: 3-isopropylmalate dehydratase large subunit (469 aa).

[4Fe-4S] cluster is bound by residues cysteine 349, cysteine 410, and cysteine 413.

The protein belongs to the aconitase/IPM isomerase family. LeuC type 1 subfamily. As to quaternary structure, heterodimer of LeuC and LeuD. It depends on [4Fe-4S] cluster as a cofactor.

It catalyses the reaction (2R,3S)-3-isopropylmalate = (2S)-2-isopropylmalate. It participates in amino-acid biosynthesis; L-leucine biosynthesis; L-leucine from 3-methyl-2-oxobutanoate: step 2/4. In terms of biological role, catalyzes the isomerization between 2-isopropylmalate and 3-isopropylmalate, via the formation of 2-isopropylmaleate. The protein is 3-isopropylmalate dehydratase large subunit of Neisseria gonorrhoeae (strain NCCP11945).